The sequence spans 484 residues: Probable cytosol aminopeptidase (484 aa).

The Mn(2+) site is built by Lys256 and Asp261. Residue Lys268 is part of the active site. Mn(2+) is bound by residues Asp279, Asp338, and Glu340. Arg342 is an active-site residue.

This sequence belongs to the peptidase M17 family. The cofactor is Mn(2+).

The protein localises to the cytoplasm. The catalysed reaction is Release of an N-terminal amino acid, Xaa-|-Yaa-, in which Xaa is preferably Leu, but may be other amino acids including Pro although not Arg or Lys, and Yaa may be Pro. Amino acid amides and methyl esters are also readily hydrolyzed, but rates on arylamides are exceedingly low.. It carries out the reaction Release of an N-terminal amino acid, preferentially leucine, but not glutamic or aspartic acids.. Its function is as follows. Presumably involved in the processing and regular turnover of intracellular proteins. Catalyzes the removal of unsubstituted N-terminal amino acids from various peptides. In Methylibium petroleiphilum (strain ATCC BAA-1232 / LMG 22953 / PM1), this protein is Probable cytosol aminopeptidase.